We begin with the raw amino-acid sequence, 61 residues long: Cobrotoxin-b (61 aa).

Disulfide bonds link C3–C23, C17–C40, C42–C53, and C54–C59.

It belongs to the three-finger toxin family. Short-chain subfamily. Type I alpha-neurotoxin sub-subfamily. In terms of tissue distribution, expressed by the venom gland.

Its subcellular location is the secreted. Functionally, produces peripheral paralysis by blocking neuromuscular transmission at the postsynaptic site. Binds to the nicotinic acetylcholine receptor. The protein is Cobrotoxin-b of Naja kaouthia (Monocled cobra).